A 431-amino-acid polypeptide reads, in one-letter code: Histidine--tRNA ligase (431 aa).

The protein belongs to the class-II aminoacyl-tRNA synthetase family.

The protein localises to the cytoplasm. It carries out the reaction tRNA(His) + L-histidine + ATP = L-histidyl-tRNA(His) + AMP + diphosphate + H(+). In Pyrococcus horikoshii (strain ATCC 700860 / DSM 12428 / JCM 9974 / NBRC 100139 / OT-3), this protein is Histidine--tRNA ligase (hisS).